Here is a 433-residue protein sequence, read N- to C-terminus: Enolase (433 aa).

A (2R)-2-phosphoglycerate-binding site is contributed by Gln-164. Catalysis depends on Glu-206, which acts as the Proton donor. The Mg(2+) site is built by Asp-243, Glu-289, and Asp-316. Residues Lys-341, Arg-370, Ser-371, and Lys-392 each coordinate (2R)-2-phosphoglycerate. Lys-341 functions as the Proton acceptor in the catalytic mechanism.

This sequence belongs to the enolase family. Mg(2+) serves as cofactor.

The protein resides in the cytoplasm. The protein localises to the secreted. It localises to the cell surface. It carries out the reaction (2R)-2-phosphoglycerate = phosphoenolpyruvate + H2O. The protein operates within carbohydrate degradation; glycolysis; pyruvate from D-glyceraldehyde 3-phosphate: step 4/5. Catalyzes the reversible conversion of 2-phosphoglycerate (2-PG) into phosphoenolpyruvate (PEP). It is essential for the degradation of carbohydrates via glycolysis. The protein is Enolase of Borreliella burgdorferi (strain ATCC 35210 / DSM 4680 / CIP 102532 / B31) (Borrelia burgdorferi).